The sequence spans 121 residues: Large ribosomal subunit protein uL22 (121 aa).

The protein belongs to the universal ribosomal protein uL22 family. In terms of assembly, part of the 50S ribosomal subunit.

Its function is as follows. This protein binds specifically to 23S rRNA; its binding is stimulated by other ribosomal proteins, e.g. L4, L17, and L20. It is important during the early stages of 50S assembly. It makes multiple contacts with different domains of the 23S rRNA in the assembled 50S subunit and ribosome. In terms of biological role, the globular domain of the protein is located near the polypeptide exit tunnel on the outside of the subunit, while an extended beta-hairpin is found that lines the wall of the exit tunnel in the center of the 70S ribosome. The sequence is that of Large ribosomal subunit protein uL22 from Synechococcus sp. (strain CC9311).